The sequence spans 122 residues: U19-hexatoxin-Hi1a (122 aa).

An N-terminal signal peptide occupies residues 1-18; sequence MNTMIGFIVLLVSATVLG. A propeptide spanning residues 19-80 is cleaved from the precursor; that stretch reads DPELDALRKE…YENSNFREKR (62 aa). 3 disulfide bridges follow: cysteine 81–cysteine 96, cysteine 88–cysteine 101, and cysteine 95–cysteine 116.

In terms of tissue distribution, expressed by the venom gland.

It localises to the secreted. In terms of biological role, probable ion channel inhibitor. This chain is U19-hexatoxin-Hi1a, found in Hadronyche infensa (Fraser island funnel-web spider).